Here is a 115-residue protein sequence, read N- to C-terminus: U3-lycotoxin-Ls1o (115 aa).

Residues 1-20 (MKFVLLFGVLLVTLFSYSSA) form the signal peptide. Positions 21–44 (EMLDDFDQADEDELLSLIEKEEAR) are excised as a propeptide. 4 disulfides stabilise this stretch: Cys48/Cys63, Cys55/Cys72, Cys62/Cys87, and Cys74/Cys85.

It belongs to the neurotoxin 19 (CSTX) family. 01 subfamily. Expressed by the venom gland.

The protein localises to the secreted. This Lycosa singoriensis (Wolf spider) protein is U3-lycotoxin-Ls1o.